The following is a 265-amino-acid chain: RING finger protein 208 (265 aa).

Residues 83–106 (MPTLEGASHTPPLPRRPRKGSSEL) form a disordered region. A Phosphoserine modification is found at S103. An RING-type zinc finger spans residues 147–194 (CPTCGHTYNVTQRRPRVLSCLHSVCEQCLQILYESCPKYKFISCPTCH).

This Mus musculus (Mouse) protein is RING finger protein 208 (Rnf208).